The following is a 2167-amino-acid chain: RNA editing associated helicase 2 (2167 aa).

The transit peptide at 1–30 (MRAIRLTVACRYLGPFRSVTLSPVVLPVRL) directs the protein to the mitochondrion. Disordered stretches follow at residues 503 to 593 (RARG…DEAT) and 937 to 969 (ENAT…PTNV). Positions 532–541 (SSTQTPSSST) are enriched in low complexity. Residues 1024-1095 (DAKTVLQRYC…AMHALALLRR (72 aa)) form the DRBM domain. Positions 1348–1513 (LRAISSNQIV…FGNAPIINVE (166 aa)) constitute a Helicase ATP-binding domain. Residue 1361 to 1368 (GTTGCGKT) coordinates ATP. Residues 1366 to 1367 (GK) carry the Important for binding to gRNA motif. A DEAH box motif is present at residues 1460–1463 (DEIH). A Helicase C-terminal domain is found at 1585-1762 (AIDHAVRSLD…SLCLQILALD (178 aa)). The disordered stretch occupies residues 2132-2167 (IIEPCTEPKGGSSEAEKTHVNSSHTPTTSAEAGGDS). Residues 2151-2161 (VNSSHTPTTSA) are compositionally biased toward polar residues.

This sequence belongs to the DEAD box helicase family. DEAH subfamily. Component of the REH2-associated complex (REH2C) composed of helicase REH2, associated factors H2F1 and H2F2, and mRNAs at various editing stages; the formation of the complex is RNA-independent. Within the complex, interacts with H2F1; the interaction is direct. Interacts transiently, in a RNA-dependent manner, with various editing complexes including the RNA editing core (RECC) complex, the gRNA-binding (GRBC) complex (also known as the MRB1 complex) and the RNA editing mediator (REMC) complex. Interacts with GAP1/GRBC2 via RNA forming a variant of the GRBC complex known as REH2-GRBC complex. Interacts with mitochondrial ribosomes.

The protein resides in the mitochondrion. It catalyses the reaction ATP + H2O = ADP + phosphate + H(+). Functionally, ATP-dependent RNA helicase that unwinds RNA in a 3' to 5' direction and that plays an important role in mitochondrial mRNA editing, a process involving the addition and deletion of uridine (U) nucleotides in the pre-mRNA. As part of the RET2-containing gRNA-binding (RET2-GRBC) complex, acts as a scaffold for the assembly of mRNA-gRNA hybrids and the recruitment of the RNA editing core (RECC) complex. Regulates several steps of mRNA editing by the MRBC3010/GRBC6 containing gRNA-binding (MRBC3010-GRBC) complex including loading of unedited mRNA, editing in the first sequence block and subsequent editing progression across multiple sequence blocks. Also, regulates the RNA substrate content of the MRBC3010-GRBC complex as well as the association of this complex with mitoribosomes. This is RNA editing associated helicase 2 from Trypanosoma brucei brucei (strain 927/4 GUTat10.1).